A 322-amino-acid chain; its full sequence is Malate dehydrogenase (322 aa).

NAD(+) contacts are provided by residues glycine 10 to glycine 15 and aspartate 34. 2 residues coordinate substrate: arginine 83 and arginine 89. Residues asparagine 96 and isoleucine 119–asparagine 121 contribute to the NAD(+) site. Substrate contacts are provided by asparagine 121 and arginine 152. Histidine 176 (proton acceptor) is an active-site residue.

Belongs to the LDH/MDH superfamily. MDH type 3 family.

It carries out the reaction (S)-malate + NAD(+) = oxaloacetate + NADH + H(+). Functionally, catalyzes the reversible oxidation of malate to oxaloacetate. This Rhodopseudomonas palustris (strain HaA2) protein is Malate dehydrogenase.